The chain runs to 395 residues: Elongation factor Tu (395 aa).

Positions 10–204 constitute a tr-type G domain; sequence KPHVNIGTIG…NVDEYIPLPQ (195 aa). The G1 stretch occupies residues 19 to 26; sequence GHVDHGKT. 19 to 26 is a GTP binding site; that stretch reads GHVDHGKT. Residue T26 participates in Mg(2+) binding. The tract at residues 60–64 is G2; the sequence is GITIN. Residues 81–84 form a G3 region; that stretch reads DCPG. Residues 81–85 and 136–139 contribute to the GTP site; these read DCPGH and NKVD. The tract at residues 136–139 is G4; that stretch reads NKVD. Positions 174–176 are G5; that stretch reads SAL.

It belongs to the TRAFAC class translation factor GTPase superfamily. Classic translation factor GTPase family. EF-Tu/EF-1A subfamily. Monomer.

Its subcellular location is the cytoplasm. It catalyses the reaction GTP + H2O = GDP + phosphate + H(+). Functionally, GTP hydrolase that promotes the GTP-dependent binding of aminoacyl-tRNA to the A-site of ribosomes during protein biosynthesis. The protein is Elongation factor Tu of Amoebophilus asiaticus (strain 5a2).